Consider the following 567-residue polypeptide: Hexose transporter HXT9 (567 aa).

A compositionally biased stretch (polar residues) spans 1-16; it reads MSGVNNTSANDLSTTE. Positions 1-45 are disordered; the sequence is MSGVNNTSANDLSTTESNSNSVANAPSVKTEHNDSKNSLNLDATE. At 1–56 the chain is on the cytoplasmic side; the sequence is MSGVNNTSANDLSTTESNSNSVANAPSVKTEHNDSKNSLNLDATEPPIDLPQKPLS. Residues 17 to 28 are compositionally biased toward low complexity; that stretch reads SNSNSVANAPSV. Residues 57–77 form a helical membrane-spanning segment; that stretch reads AYTTVAILCLMIAFGGFIFGW. Topologically, residues 78 to 112 are extracellular; the sequence is DTGTISGFVNLSDFIRRFGQKNDKGTYYLSKVRMG. N-linked (GlcNAc...) asparagine glycosylation is present at Asn87. Residues 113-133 form a helical membrane-spanning segment; sequence LIVSIFNIGCAIGGIVLSKVG. Residues 134–139 are Cytoplasmic-facing; it reads DIYGRR. The chain crosses the membrane as a helical span at residues 140 to 160; that stretch reads IGLITVTAIYVVGILIQITSI. Over 161–170 the chain is Extracellular; that stretch reads NKWYQYFIGR. The helical transmembrane segment at 171 to 191 threads the bilayer; the sequence is IISGLGVGGIAVLSPMLISEV. Topologically, residues 192-197 are cytoplasmic; it reads APKQIR. A helical membrane pass occupies residues 198 to 218; sequence GTLVQLYQLMCTMGIFLGYCT. Residues 219 to 232 are Extracellular-facing; that stretch reads NYGTKNYHNATQWR. Residue Asn227 is glycosylated (N-linked (GlcNAc...) asparagine). The chain crosses the membrane as a helical span at residues 233-253; it reads VGLGLCFAWTTFMVSGMMFVP. At 254-336 the chain is on the cytoplasmic side; the sequence is ESPRYLIEVG…IQSLQQLTGD (83 aa). Residues 337–353 form a helical membrane-spanning segment; that stretch reads NYFFYYGTTIFKSVGLK. Residues 354 to 359 are Extracellular-facing; that stretch reads DSFQTS. Residues 360-377 form a helical membrane-spanning segment; sequence IIIGVVNFFSSFIAVYTI. Residues 378–384 are Cytoplasmic-facing; the sequence is ERFGRRT. A helical transmembrane segment spans residues 385–405; it reads CLLWGAASMLCCFAVFASVGV. Topologically, residues 406 to 429 are extracellular; the sequence is TKLWPQGSSHQDITSQGAGNCMIV. The helical transmembrane segment at 430–450 threads the bilayer; the sequence is FTMFFIFSFATTWAGGCYVIV. The Cytoplasmic segment spans residues 451–467; sequence SETFPLRVKSRGMAIAT. A helical membrane pass occupies residues 468-488; the sequence is AANWMWGFLISFFTPFITGAI. Residue Asn489 is a topological domain, extracellular. A helical membrane pass occupies residues 490-510; the sequence is FYYGYVFLGCLVFAYFYVFFF. Topologically, residues 511–567 are cytoplasmic; it reads VPETKGLTLEEVNTMWLEGVPAWKSASWVPPERRTADYDADAIDHDDRPIYKRFFSS.

The protein belongs to the major facilitator superfamily. Sugar transporter (TC 2.A.1.1) family.

The protein localises to the membrane. In terms of biological role, probable glucose transporter. The chain is Hexose transporter HXT9 (HXT9) from Saccharomyces cerevisiae (strain ATCC 204508 / S288c) (Baker's yeast).